We begin with the raw amino-acid sequence, 267 residues long: tRNA pseudouridine synthase A (267 aa).

The active-site Nucleophile is aspartate 54. Tyrosine 112 lines the substrate pocket.

Belongs to the tRNA pseudouridine synthase TruA family. In terms of assembly, homodimer.

It carries out the reaction uridine(38/39/40) in tRNA = pseudouridine(38/39/40) in tRNA. Formation of pseudouridine at positions 38, 39 and 40 in the anticodon stem and loop of transfer RNAs. This chain is tRNA pseudouridine synthase A, found in Bordetella avium (strain 197N).